The chain runs to 832 residues: Receptor-interacting serine/threonine-protein kinase 4 (832 aa).

The Protein kinase domain occupies 22–286 (FTGWEKVGSG…QGNGLNGELI (265 aa)). ATP contacts are provided by residues 28–36 (VGSGGFGQV) and Lys51. A Glycyl lysine isopeptide (Lys-Gly) (interchain with G-Cter in ubiquitin) cross-link involves residue Lys51. The Proton acceptor role is filled by Asp143. Residue Lys145 forms a Glycyl lysine isopeptide (Lys-Gly) (interchain with G-Cter in ubiquitin) linkage. Disordered regions lie at residues 325–368 (QEIT…RLKR) and 389–424 (SGVSQAVEGPEELSRSSSESKLPSSGSGKRLSGVSS). A compositionally biased stretch (acidic residues) spans 329 to 342 (SETEDLCEKPDDEV). Positions 343-359 (KETAHDLDVKSPPEPRS) are enriched in basic and acidic residues. Positions 403–424 (RSSSESKLPSSGSGKRLSGVSS) are enriched in low complexity. ANK repeat units follow at residues 485–514 (SGASLLHLAVEAGQEECAKWLLLNNANPNL), 518–547 (RGSTPLHMAVERRVRGVVELLLARKISVNA), 551–580 (DQWTALHFAAQNGDESSTRLLLEKNASVNE), 584–613 (EGRTPMHVACQHGQENIVRILLRRGVDVSL), 617–647 (DAWLPLHYAAWQGHLPIVKLLAKQPGVSVNA), 651–680 (DGRTPLHLAAQRGHYRVARILIDLCSDVNV), 684–713 (LAQTPLHVAAETGHTSTARLLLHRGAGKEA), 717–746 (DGYTALHLAARNGHLATVKLLVEEKADVLA), 750–780 (LNQTALHLAAAHGHSEVVEELVSADVIDLFD), and 782–811 (QGLSALHLAAQGRHAQTVETLLRHGAHINL).

Belongs to the protein kinase superfamily. TKL Ser/Thr protein kinase family. As to quaternary structure, interacts with PRKCB. Interacts with TRAF1, TRAF2, TRAF3 and TRAF5. Interacts with BIRC2/c-IAP1, BIRC3/c-IAP2 and XIAP/BIRC4. May be phosphorylated by MAP3K2 and MAP3K3. In terms of processing, proteolytically cleaved by during Fas-induced apoptosis. Cleavage at Asp-388 and Asp-426. Post-translationally, polyubiquitinated with 'Lys-48' and 'Lys-63'-linked chains by BIRC2/c-IAP1 and BIRC3/c-IAP2, leading to activation of NF-kappa-B. In terms of tissue distribution, expressed in hair follicles and skin.

The protein resides in the cytoplasm. It localises to the membrane. The catalysed reaction is L-seryl-[protein] + ATP = O-phospho-L-seryl-[protein] + ADP + H(+). It carries out the reaction L-threonyl-[protein] + ATP = O-phospho-L-threonyl-[protein] + ADP + H(+). Serine/threonine protein kinase. Required for embryonic skin development and correct skin homeostasis in adults, via phosphorylation of PKP1 and subsequent promotion of keratinocyte differentiation and cell adhesion. It is a direct transcriptional target of TP63. Plays a role in NF-kappa-B activation. This is Receptor-interacting serine/threonine-protein kinase 4 (RIPK4) from Homo sapiens (Human).